The following is a 396-amino-acid chain: Mitogen-activated protein kinase mpkC (396 aa).

In terms of domain architecture, Protein kinase spans 20–299 (YSDLQPVGLG…AAKALEHPYL (280 aa)). ATP contacts are provided by residues 26–34 (VGLGAFGLV) and lysine 49. The Proton acceptor role is filled by aspartate 141. The residue at position 171 (threonine 171) is a Phosphothreonine. Positions 171-173 (TGY) match the TXY motif. Position 173 is a phosphotyrosine (tyrosine 173).

The protein belongs to the protein kinase superfamily. Ser/Thr protein kinase family. MAP kinase subfamily. HOG1 sub-subfamily. Requires Mg(2+) as cofactor. Post-translationally, dually phosphorylated on Thr-171 and Tyr-173, which activates the enzyme.

The enzyme catalyses L-seryl-[protein] + ATP = O-phospho-L-seryl-[protein] + ADP + H(+). The catalysed reaction is L-threonyl-[protein] + ATP = O-phospho-L-threonyl-[protein] + ADP + H(+). Activated by tyrosine and threonine phosphorylation. Its function is as follows. Mitogen-activated protein kinase required for growth on media where sorbitol or mannitol is the sole carbon source. This chain is Mitogen-activated protein kinase mpkC (mpkC), found in Aspergillus niger (strain ATCC MYA-4892 / CBS 513.88 / FGSC A1513).